The chain runs to 178 residues: Small ribosomal subunit protein uS4 (178 aa).

The S4 RNA-binding domain occupies 104-166; it reads RRLQTLVYRK…PNSPMALENH (63 aa).

It belongs to the universal ribosomal protein uS4 family. In terms of assembly, part of the 30S ribosomal subunit. Contacts protein S5. The interaction surface between S4 and S5 is involved in control of translational fidelity.

In terms of biological role, one of the primary rRNA binding proteins, it binds directly to 16S rRNA where it nucleates assembly of the body of the 30S subunit. Functionally, with S5 and S12 plays an important role in translational accuracy. The protein is Small ribosomal subunit protein uS4 of Methanococcus vannielii (strain ATCC 35089 / DSM 1224 / JCM 13029 / OCM 148 / SB).